We begin with the raw amino-acid sequence, 810 residues long: MSKGPGPGGSAASSAPPAATAQVLQAQPEKPQHYTYLKEFRTEQCPLFVQHKCTQHRPYTCFHWHFVNQRRRRSIRRRDGTFNYSPDVYCTKYDEATGLCPEGDECPFLHRTTGDTERRYHLRYYKTGICIHETDSKGNCTKNGLHCAFAHGPHDLRSPVYDIRELQAMEALQNGQTTVEGSIEGQTAGAASHAMIEKILSEEPRWQETAYVLGNYKTEPCKKPPRLCRQGYACPYYHNSKDRRRSPRKHKYRSSPCPNVKHGDEWGDPGKCENGDACQYCHTRTEQQFHPEIYKSTKCNDMQQSGSCPRGPFCAFAHVEQPPLSDDLQPSSTVSSPTQPGPVLYMPSAAGDSVPVSPSSPHAPDLSTLLCRNSNLGSPSNLCGSPPGSIRKPPNLEGIVFPGESGLAPGSYKKAPGFEREDQVGAEYLKNFKCQAKLKPHSLEPRSQEQPLLQPKQDMLGILPVGSPLTSSISSSITSSLAATPPSPAGTSSVPGMNANALPFYPTSDTVESVIESALDDLDLNEFGVAALEKTFDNSTVPHPGSITIGGSLLQSSAPVNIPGSLGSSASFHSASPSPPVSLSSHFLQQPQGHLSQSENTFLGTSASHGSLGLNGMNSSIWEHFASGSFSPGTFPAFLSGPGAAELARLRQELEEANGTIKQWEESWKQAKQACDAWKKEAEEAGERASAAGAECELAREQRDALEGQVKKLQEELERLHSGPDPQALPTFSDLEALSLSTLYSLQKQLRAHLEQVDKAVFHMQSVKCLKCQEQNRAVLPCQHAVLCELCAEGSECPVCQPSRAHTLQS.

The disordered stretch occupies residues M1 to L24. A compositionally biased stretch (low complexity) spans S10 to A19. 5 C3H1-type zinc fingers span residues Y84 to T113, Y124 to H154, N215 to K241, K251 to T285, and I293 to Q321. The disordered stretch occupies residues N239 to E265. Residue S240 is modified to Phosphoserine. The span at K241–R253 shows a compositional bias: basic residues. A disordered region spans residues L324–V343. Over residues Q329–V343 the composition is skewed to low complexity. S374, S378, and S385 each carry phosphoserine. Residues S569–S585 are compositionally biased toward low complexity. The interval S569–F602 is disordered. Residues H586–F602 are compositionally biased toward polar residues. S631 carries the post-translational modification Phosphoserine. The stretch at G643–G723 forms a coiled coil. Residues S766–Q801 form an RING-type; degenerate zinc finger.

Belongs to the unkempt family.

It localises to the cytoplasm. Its function is as follows. Sequence-specific RNA-binding protein which plays an important role in the establishment and maintenance of the early morphology of cortical neurons during embryonic development. Acts as a translation repressor and controls a translationally regulated cell morphology program to ensure proper structuring of the nervous system. Translational control depends on recognition of its binding element within target mRNAs which consists of a mandatory UAG trimer upstream of a U/A-rich motif. Associated with polysomes. The chain is RING finger protein unkempt homolog (UNK) from Canis lupus familiaris (Dog).